The primary structure comprises 238 residues: NADH-quinone oxidoreductase subunit I (238 aa).

4Fe-4S ferredoxin-type domains lie at 81 to 111 (LVPR…IEAG) and 123 to 152 (VKFV…MDSG). Residues Cys-91, Cys-94, Cys-97, Cys-101, Cys-132, Cys-135, Cys-138, and Cys-142 each contribute to the [4Fe-4S] cluster site.

This sequence belongs to the complex I 23 kDa subunit family. As to quaternary structure, NDH-1 is composed of 14 different subunits. Subunits NuoA, H, J, K, L, M, N constitute the membrane sector of the complex. It depends on [4Fe-4S] cluster as a cofactor.

The protein localises to the cell inner membrane. The enzyme catalyses a quinone + NADH + 5 H(+)(in) = a quinol + NAD(+) + 4 H(+)(out). NDH-1 shuttles electrons from NADH, via FMN and iron-sulfur (Fe-S) centers, to quinones in the respiratory chain. The immediate electron acceptor for the enzyme in this species is believed to be ubiquinone. Couples the redox reaction to proton translocation (for every two electrons transferred, four hydrogen ions are translocated across the cytoplasmic membrane), and thus conserves the redox energy in a proton gradient. The sequence is that of NADH-quinone oxidoreductase subunit I from Anaeromyxobacter sp. (strain Fw109-5).